Here is a 1258-residue protein sequence, read N- to C-terminus: uncharacterized protein (1258 aa).

Residues 55 to 93 (ELASEILGVCWQENGVLAAGISEGTWKRFLAGKQAINAE) form a WD 1 repeat. The span at 112–128 (GGRTKERKDTGTSRQEK) shows a compositional bias: basic and acidic residues. The interval 112-138 (GGRTKERKDTGTSRQEKFLSSSHPHTD) is disordered. 14 WD repeats span residues 640 to 679 (ETLG…LLLI), 682 to 721 (GHSN…CIKT), 724 to 763 (GHEH…CLQT), 766 to 807 (GHTD…RTLK), 809 to 849 (HTGW…KTYI), 850 to 889 (GHTN…CIKT), 892 to 931 (GHTN…CLKA), 934 to 975 (GNTD…SSLE), 976 to 1017 (GHTD…QILL), 1019 to 1059 (HTDW…KTLS), 1060 to 1101 (EHSD…GILR), 1103 to 1143 (HSNR…KTLT), 1144 to 1183 (GHTN…CHHI), and 1186 to 1227 (GHTH…QILR).

This is an uncharacterized protein from Nostoc sp. (strain PCC 7120 / SAG 25.82 / UTEX 2576).